The chain runs to 507 residues: Zinc finger protein Aiolos (507 aa).

The tract at residues 1–85 is disordered; the sequence is MEDIQPTVEL…PMGDAEESEM (85 aa). Position 20 is a phosphothreonine (T20). A phosphoserine mark is found at S22 and S42. Basic and acidic residues-rich tracts occupy residues 33 to 46 and 56 to 72; these read KPHEIENVDSREAP and DSMKVKDEYSDRDENIM. Residues K61, K73, and K100 each participate in a glycyl lysine isopeptide (Lys-Gly) (interchain with G-Cter in SUMO2) cross-link. 3 C2H2-type zinc fingers span residues 117 to 139, 145 to 167, and 173 to 195; these read MNCDVCGLSCISFNVLMVHKRSH, FQCNQCGASFTQKGNLLRHIKLH, and FKCHLCNYACQRRDALTGHLRTH. The segment at 201-223 adopts a C2H2-type 4; atypical zinc-finger fold; sequence YKCEFCGRSYKQRSSLEEHKERC. Residue K244 forms a Glycyl lysine isopeptide (Lys-Gly) (interchain with G-Cter in SUMO2) linkage. Residue T325 is modified to Phosphothreonine. The interval 370 to 396 is disordered; the sequence is LPSERGLSPNNSAQDSTDTDSNHEDRQ. A Phosphoserine modification is found at S377. The segment at 450–472 adopts a C2H2-type 5 zinc-finger fold; sequence FRCDHCHVLFLDYVMFTIHMGCH. The tract at residues 450–502 is mediates homodimerization and heterodimerization; that stretch reads FRCDHCHVLFLDYVMFTIHMGCHGFRDPFECNMCGYRSHDRYEFSSHIARGEH. The C2H2-type 6; atypical zinc-finger motif lies at 478–502; the sequence is FECNMCGYRSHDRYEFSSHIARGEH.

Belongs to the Ikaros C2H2-type zinc-finger protein family. As to quaternary structure, homodimer. Heterodimer with other IKAROS family members. Interacts with IKZF4 and IKZF5. Interacts with HRAS. Interacts with FOXP3; this interaction may be required for silencing target genes and regulating the suppressive activity of FOXP3-positive regulatory T-cells (Treg). Interacts with BCL21L isoform Bcl-X(L); this interaction blocks the anti-apoptotic role of BCL21L. Associates with histone deacetylase complexes containing HDAC1, MTA2 and SIN3A. Interacts with IKZF1. In terms of tissue distribution, expression is restricted to lymphoid tissues. Expressed at highest levels in spleen and at lower levels in the thymus and bone marrow. First detected in more committed lymphoid progenitors and strongly up-regulated as these differentiate into pre-T and pre-B cell precursors.

The protein resides in the nucleus. It is found in the cytoplasm. Its function is as follows. Transcription factor that plays an important role in the regulation of lymphocyte differentiation. Binds to GGGAA. Plays an essential role in regulation of B-cell differentiation, proliferation and maturation to an effector state. Involved in regulating BCL2 expression and controlling apoptosis in T-cells in an IL2-dependent manner. This Mus musculus (Mouse) protein is Zinc finger protein Aiolos (Ikzf3).